Reading from the N-terminus, the 417-residue chain is Acetyltransferase cdmC (417 aa).

N-linked (GlcNAc...) asparagine glycosylation occurs at N64. 3 consecutive transmembrane segments (helical) span residues 308–328 (IPDG…GYLV), 357–377 (GIFW…YPLL), and 389–409 (LVES…AFIL).

The protein belongs to the wax synthase family.

It localises to the membrane. It carries out the reaction chrodrimanin A + acetyl-CoA = chrodrimanin B + CoA. It functions in the pathway secondary metabolite biosynthesis; terpenoid biosynthesis. In terms of biological role, acetyltransferase; part of the gene cluster that mediates the biosynthesis of chrodrimanin B, a meroterpenoid that acts as a potent blocker of insect GABA-gated chloride channels. The first step of the pathway is the biosynthesis of 6-hydroxymellein by the polyketide synthase cdmE. The prenyltransferase cdmH acts as a 6-hydroxymellein 5-farnesyltransferase and produces the hydrophobic metabolite verruculide C. The FAD-dependent monooxygenase cdmI further converts verruculide C into verruculide B. The terpene cyclase cdmG then produced the pentacyclic molecule 3-hydroxypentacecilide A, the backbone structure of chrodrimanin B, via folding the farnesyl moiety of the substrate into the chair-boat conformation. The short-chain dehydrogenase/reductase cdmF functions as the 3-OH dehydrogenase that oxidizes the C-3 hydroxyl group of 3-hydroxypentacecilide A and produces chrodrimanin C, the dehydrogenated product of 3-hydroxypentacecilide A. The cytochrome P450 monooxygenase cdmJ then accepts both 3-hydroxypentacecilide A and chrodrimanin C and functions as a C-7-beta-hydroxylase to produce respectively chrodrimanin H and chrodrimanin F. The dioxygenase cdmA accepts chrodrimanin H to afford chrodrimanin E, which is further transformed to chrodrimanin A by the dioxygenase cdmD. CdmA can also accept chrodrimanin C as substrate to convert it into verruculide A, which is further converted into chrodrimanin T by cdmD. The last step of the biosynthesis is proposed to be performed by the acetyltransferase cdmC which acetylates chrodrimanin A to yield chrodrimanin B. The pathway may also lead to the production of additional shunt products, including chrodrimanins T and U. This is Acetyltransferase cdmC from Talaromyces verruculosus (Penicillium verruculosum).